The chain runs to 184 residues: Photosystem I assembly protein Ycf4 (184 aa).

A run of 2 helical transmembrane segments spans residues I19–G39 and I57–S77.

The protein belongs to the Ycf4 family.

The protein localises to the plastid thylakoid membrane. Functionally, seems to be required for the assembly of the photosystem I complex. The polypeptide is Photosystem I assembly protein Ycf4 (Cuscuta exaltata (Tall dodder)).